Here is a 661-residue protein sequence, read N- to C-terminus: Arginine--tRNA ligase, cytoplasmic (661 aa).

Position 1 is an N-acetylmethionine (Met1). The could be involved in the assembly of the multisynthetase complex stretch occupies residues 1–73 (MDGLVAQCSA…AEKRRRPTKN (73 aa)). Residues 201-203 (SPN), His212, Tyr385, Asp389, and Gln413 contribute to the L-arginine site. The short motif at 202-213 (PNIAKEMHVGHL) is the 'HIGH' region element. The interaction with tRNA stretch occupies residues 530–544 (NTAAYLLYAFTRIRS).

This sequence belongs to the class-I aminoacyl-tRNA synthetase family. Interacts (via N-terminus) with AIMP1 (via N-terminus); this stimulates its catalytic activity. Interacts (via N-terminus) with LARS2 (via C-terminus). Monomer. Part of a multisubunit complex that groups tRNA ligases for Arg (RARS1), Asp (DARS1), Gln (QARS1), Ile (IARS1), Leu (LARS1), Lys (KARS1), Met (MARS1) the bifunctional ligase for Glu and Pro (EPRS1) and the auxiliary subunits AIMP1/p43, AIMP2/p38 and EEF1E1/p18. Interacts with QARS1. Part of a complex composed of RARS1, QARS1 and AIMP1.

It is found in the cytoplasm. It localises to the cytosol. The catalysed reaction is tRNA(Arg) + L-arginine + ATP = L-arginyl-tRNA(Arg) + AMP + diphosphate. Its function is as follows. Forms part of a macromolecular complex that catalyzes the attachment of specific amino acids to cognate tRNAs during protein synthesis. Modulates the secretion of AIMP1 and may be involved in generation of the inflammatory cytokine EMAP2 from AIMP1. The chain is Arginine--tRNA ligase, cytoplasmic (RARS1) from Cricetulus griseus (Chinese hamster).